The primary structure comprises 255 residues: ParA family protein TC_0871 (255 aa).

The protein belongs to the ParA family.

This chain is ParA family protein TC_0871, found in Chlamydia muridarum (strain MoPn / Nigg).